The chain runs to 107 residues: MQLSTTPTLEGFTITEYCGVVTGEAILGANIFRDFFASIRDVVGGRSGAYEKELRKARQIAFKELQEQAADLGANAVVGIDLDYETVGKDGSMLMVTVSGTAVKVRR.

It belongs to the UPF0145 family.

This is UPF0145 protein PC1_1703 from Pectobacterium carotovorum subsp. carotovorum (strain PC1).